Consider the following 250-residue polypeptide: MSRRYDSRTTIFSPEGRLYQVEYAMEAIGNAGSALGVLAADGVVLVGEKKVTSKLLQTSRSAEKMYKIDSHLACAVAGIMSDANILLNTARLHAQRYALSYQEPIPVEQLVQSLCDTKQGYTQFGGLRPFGVSFLFAGWDKHHGFQLYMSDPSGNYSGWKAAAVGANSQAAQSMLKQDYRDGMTREEAVALALKVLSKTMDSTSLTAEKLELAEVFLQPGTGEVQYQVCSPEAMGKLLAKAGLSQPAPEA.

The protein belongs to the peptidase T1A family. The 26S proteasome consists of a 20S proteasome core and two 19S regulatory subunits. The 20S proteasome core is composed of 28 subunits that are arranged in four stacked rings, resulting in a barrel-shaped structure. The two end rings are each formed by seven alpha subunits, and the two central rings are each formed by seven beta subunits. The catalytic chamber with the active sites is on the inside of the barrel.

The protein localises to the cytoplasm. It localises to the nucleus. Its function is as follows. The proteasome is a multicatalytic proteinase complex which is characterized by its ability to cleave peptides with Arg, Phe, Tyr, Leu, and Glu adjacent to the leaving group at neutral or slightly basic pH. The proteasome has an ATP-dependent proteolytic activity. The polypeptide is Proteasome subunit alpha type-4-1 (Oryza sativa subsp. indica (Rice)).